An 84-amino-acid polypeptide reads, in one-letter code: Cell division topological specificity factor (84 aa).

The protein belongs to the MinE family.

Prevents the cell division inhibition by proteins MinC and MinD at internal division sites while permitting inhibition at polar sites. This ensures cell division at the proper site by restricting the formation of a division septum at the midpoint of the long axis of the cell. This chain is Cell division topological specificity factor, found in Rhodopseudomonas palustris (strain BisA53).